A 329-amino-acid polypeptide reads, in one-letter code: Biotin--protein ligase 2 (329 aa).

Positions 67 to 251 constitute a BPL/LPL catalytic domain; the sequence is ISTHRFGRFL…KFENFFDLFM (185 aa). Biotin is bound by residues 84–85, Gln-107, 111–113, and Lys-182; these read ST and RGR.

It belongs to the biotin--protein ligase family. In terms of tissue distribution, highly expressed in seeds. Expressed in roots, leaves, stems, flowers and siliques.

The protein resides in the cytoplasm. Its function is as follows. Seems to have no or limited implication in biotin-dependent carboxylase biotinylation in planta. The protein is Biotin--protein ligase 2 (HCS2) of Arabidopsis thaliana (Mouse-ear cress).